Consider the following 600-residue polypeptide: Elongation factor 4 (600 aa).

A tr-type G domain is found at 4-186; it reads DTIRNFSIIA…EIVKKIPPPE (183 aa). GTP contacts are provided by residues 16–21 and 133–136; these read DHGKST and NKID.

This sequence belongs to the TRAFAC class translation factor GTPase superfamily. Classic translation factor GTPase family. LepA subfamily.

Its subcellular location is the cell inner membrane. It catalyses the reaction GTP + H2O = GDP + phosphate + H(+). Its function is as follows. Required for accurate and efficient protein synthesis under certain stress conditions. May act as a fidelity factor of the translation reaction, by catalyzing a one-codon backward translocation of tRNAs on improperly translocated ribosomes. Back-translocation proceeds from a post-translocation (POST) complex to a pre-translocation (PRE) complex, thus giving elongation factor G a second chance to translocate the tRNAs correctly. Binds to ribosomes in a GTP-dependent manner. The protein is Elongation factor 4 of Geobacter sulfurreducens (strain ATCC 51573 / DSM 12127 / PCA).